We begin with the raw amino-acid sequence, 64 residues long: Large ribosomal subunit protein bL35 (64 aa).

The segment at 19–44 (TGKLKASRPGRRHKLTGKTPKRKRQL) is disordered. Residues 23–44 (KASRPGRRHKLTGKTPKRKRQL) show a composition bias toward basic residues.

Belongs to the bacterial ribosomal protein bL35 family.

This is Large ribosomal subunit protein bL35 from Protochlamydia amoebophila (strain UWE25).